Reading from the N-terminus, the 300-residue chain is Interferon-stimulated gene 20 kDa protein (300 aa).

Aspartate 11, glutamate 13, aspartate 90, and histidine 93 together coordinate Mn(2+).

It belongs to the exonuclease superfamily. Associates with PML and SP100 in the PML NB complex. Associates with survival motor neuron protein (SMN)-containing macromolecular nuclear complexes and U1 and U2 snRNAs and U3 snoRNA. Mn(2+) serves as cofactor.

It is found in the nucleus. The protein resides in the nucleolus. Its subcellular location is the cytoplasm. The protein localises to the cajal body. It localises to the P-body. The catalysed reaction is Exonucleolytic cleavage in the 3'- to 5'-direction to yield nucleoside 5'-phosphates.. Its function is as follows. Interferon-induced antiviral exoribonuclease that acts mainly on single-stranded RNA. Inhibition of several viruses does not involve the degradation of viral RNAs, but rather the inhibition of translation of viral proteins. Exerts a translational control over a large panel of non-self RNA substrates while sparing endogenous transcripts. This activity correlates with the protein's ability to localize in cytoplasmic processing bodies. May also act as master regulator of over hundred interferon stimulated genes leading to viral genome translation inhibition. May play additional roles in the maturation of snRNAs and rRNAs, and in ribosome biogenesis. This chain is Interferon-stimulated gene 20 kDa protein (Isg20), found in Mus musculus (Mouse).